The primary structure comprises 436 residues: Glutamyl-tRNA reductase (436 aa).

Substrate is bound by residues 49–52, Ser109, 114–116, and Gln120; these read TCNR and EGQ. Cys50 serves as the catalytic Nucleophile. 198-203 is an NADP(+) binding site; the sequence is GAGRMS.

This sequence belongs to the glutamyl-tRNA reductase family. Homodimer.

The enzyme catalyses (S)-4-amino-5-oxopentanoate + tRNA(Glu) + NADP(+) = L-glutamyl-tRNA(Glu) + NADPH + H(+). The protein operates within porphyrin-containing compound metabolism; protoporphyrin-IX biosynthesis; 5-aminolevulinate from L-glutamyl-tRNA(Glu): step 1/2. Its pathway is porphyrin-containing compound metabolism; chlorophyll biosynthesis. In terms of biological role, catalyzes the NADPH-dependent reduction of glutamyl-tRNA(Glu) to glutamate 1-semialdehyde (GSA). In Prochlorococcus marinus (strain MIT 9303), this protein is Glutamyl-tRNA reductase.